The sequence spans 2203 residues: Genome polyprotein (2203 aa).

Residue glycine 2 is the site of N-myristoyl glycine; by host attachment. Over 2–1513 (GAQVSTQKTG…HVSRAFICLQ (1512 aa)) the chain is Cytoplasmic. The interval 567–583 (ELQNDVRQAVEGAIGRV) is amphipathic alpha-helix. Active-site for protease 2A activity residues include histidine 890 and aspartate 908. Zn(2+) contacts are provided by cysteine 925 and cysteine 927. Cysteine 979 acts as the For protease 2A activity in catalysis. Positions 985 and 987 each coordinate Zn(2+). The tract at residues 1119–1191 (SNGWLKKFTE…EQSAPSQSDQ (73 aa)) is membrane-binding. The tract at residues 1119 to 1257 (SNGWLKKFTE…SPGAGKSVAT (139 aa)) is oligomerization. Residues 1140-1144 (AVKIQ) are RNA-binding. In terms of domain architecture, SF3 helicase spans 1223 to 1379 (EKKMSNYIQF…SMYSQNGKIN (157 aa)). Cysteine 1387, cysteine 1399, and cysteine 1404 together coordinate Zn(2+). A C4-type; degenerate zinc finger spans residues 1387-1404 (CDEECCPVNFKRCCPLVC). Residues 1431–1438 (EYNHRHSV) are RNA-binding. The tract at residues 1442–1447 (LEALFQ) is oligomerization. The stretch at 1514-1529 (ALTTFVSVAGIIYIIY) is an intramembrane region. Topologically, residues 1530-2203 (KLFAGFQGAY…TLRRKWLDSF (674 aa)) are cytoplasmic. Position 1539 is an O-(5'-phospho-RNA)-tyrosine (tyrosine 1539). Residues 1559–1737 (GPAFEFAVAM…FSAALLRHYF (179 aa)) enclose the Peptidase C3 domain. Active-site for protease 3C activity residues include histidine 1598, glutamate 1629, and cysteine 1705. The RdRp catalytic domain occupies 1968 to 2084 (GHLIAFDYSG…SYPWPIDASL (117 aa)). Aspartate 1974 and aspartate 2070 together coordinate Mg(2+).

Belongs to the picornaviruses polyprotein family. Interacts with capsid protein VP1 and capsid protein VP3 to form heterotrimeric protomers. In terms of assembly, interacts with capsid protein VP0, and capsid protein VP3 to form heterotrimeric protomers. Five protomers subsequently associate to form pentamers which serve as building blocks for the capsid. Interacts with capsid protein VP2, capsid protein VP3 and capsid protein VP4 following cleavage of capsid protein VP0. As to quaternary structure, interacts with capsid protein VP1 and capsid protein VP3 in the mature capsid. Interacts with capsid protein VP0 and capsid protein VP1 to form heterotrimeric protomers. Five protomers subsequently associate to form pentamers which serve as building blocks for the capsid. Interacts with capsid protein VP4 in the mature capsid. Interacts with protein 2C; this interaction may be important for virion morphogenesis. In terms of assembly, interacts with capsid protein VP1 and capsid protein VP3. As to quaternary structure, homodimer. Homohexamer; forms a hexameric ring structure with 6-fold symmetry characteristic of AAA+ ATPases. Interacts (via N-terminus) with host RTN3 (via reticulon domain); this interaction is important for viral replication. Interacts with capsid protein VP3; this interaction may be important for virion morphogenesis. In terms of assembly, interacts with protein 3CD. As to quaternary structure, homodimer. Interacts with host GBF1. Interacts (via GOLD domain) with host ACBD3 (via GOLD domain); this interaction allows the formation of a viral protein 3A/ACBD3 heterotetramer with a 2:2 stoichiometry, which will stimulate the recruitment of host PI4KB in order to synthesize PI4P at the viral RNA replication sites. Interacts with RNA-directed RNA polymerase. In terms of assembly, interacts with protein 3AB and with RNA-directed RNA polymerase. As to quaternary structure, interacts with Viral protein genome-linked and with protein 3CD. Requires Mg(2+) as cofactor. In terms of processing, specific enzymatic cleavages in vivo by the viral proteases yield processing intermediates and the mature proteins. Myristoylation is required for the formation of pentamers during virus assembly. Further assembly of 12 pentamers and a molecule of genomic RNA generates the provirion. Post-translationally, during virion maturation, immature virions are rendered infectious following cleavage of VP0 into VP4 and VP2. This maturation seems to be an autocatalytic event triggered by the presence of RNA in the capsid and it is followed by a conformational change infectious virion. In terms of processing, myristoylation is required during RNA encapsidation and formation of the mature virus particle. VPg is uridylylated by the polymerase into VPg-pUpU. This acts as a nucleotide-peptide primer for the genomic RNA replication.

It localises to the virion. The protein resides in the host cytoplasm. Its subcellular location is the host cytoplasmic vesicle membrane. It is found in the host nucleus. It catalyses the reaction a ribonucleoside 5'-triphosphate + H2O = a ribonucleoside 5'-diphosphate + phosphate + H(+). The catalysed reaction is Selective cleavage of Tyr-|-Gly bond in the picornavirus polyprotein.. It carries out the reaction RNA(n) + a ribonucleoside 5'-triphosphate = RNA(n+1) + diphosphate. The enzyme catalyses Selective cleavage of Gln-|-Gly bond in the poliovirus polyprotein. In other picornavirus reactions Glu may be substituted for Gln, and Ser or Thr for Gly.. Replication or transcription is subject to high level of random mutations by the nucleotide analog ribavirin. In terms of biological role, forms an icosahedral capsid of pseudo T=3 symmetry with capsid proteins VP2 and VP3. The capsid is 300 Angstroms in diameter, composed of 60 copies of each capsid protein and enclosing the viral positive strand RNA genome. Capsid protein VP1 mainly forms the vertices of the capsid. Capsid protein VP1 interacts with host cell receptor to provide virion attachment to target host cells. This attachment induces virion internalization. Tyrosine kinases are probably involved in the entry process. After binding to its receptor, the capsid undergoes conformational changes. Capsid protein VP1 N-terminus (that contains an amphipathic alpha-helix) and capsid protein VP4 are externalized. Together, they shape a pore in the host membrane through which viral genome is translocated to host cell cytoplasm. Its function is as follows. Forms an icosahedral capsid of pseudo T=3 symmetry with capsid proteins VP2 and VP3. The capsid is 300 Angstroms in diameter, composed of 60 copies of each capsid protein and enclosing the viral positive strand RNA genome. Lies on the inner surface of the capsid shell. After binding to the host receptor, the capsid undergoes conformational changes. Capsid protein VP4 is released, Capsid protein VP1 N-terminus is externalized, and together, they shape a pore in the host membrane through which the viral genome is translocated into the host cell cytoplasm. Functionally, component of immature procapsids, which is cleaved into capsid proteins VP4 and VP2 after maturation. Allows the capsid to remain inactive before the maturation step. In terms of biological role, cysteine protease that cleaves viral polyprotein and specific host proteins. It is responsible for the autocatalytic cleavage between the P1 and P2 regions, which is the first cleavage occurring in the polyprotein. Also cleaves the host translation initiation factor EIF4G1, in order to shut down the capped cellular mRNA translation. Inhibits the host nucleus-cytoplasm protein and RNA trafficking by cleaving host members of the nuclear pores. Counteracts stress granule formation probably by antagonizing its assembly or promoting its dissassembly. Its function is as follows. Plays an essential role in the virus replication cycle by acting as a viroporin. Creates a pore in the host endoplasmic reticulum and as a consequence releases Ca2+ in the cytoplasm of infected cell. In turn, high levels of cytoplasmic calcium may trigger membrane trafficking and transport of viral ER-associated proteins to viroplasms, sites of viral genome replication. Induces and associates with structural rearrangements of intracellular membranes. Displays RNA-binding, nucleotide binding and NTPase activities. May play a role in virion morphogenesis and viral RNA encapsidation by interacting with the capsid protein VP3. Functionally, localizes the viral replication complex to the surface of membranous vesicles. Together with protein 3CD binds the Cis-Active RNA Element (CRE) which is involved in RNA synthesis initiation. Acts as a cofactor to stimulate the activity of 3D polymerase, maybe through a nucleid acid chaperone activity. In terms of biological role, localizes the viral replication complex to the surface of membranous vesicles. It inhibits host cell endoplasmic reticulum-to-Golgi apparatus transport and causes the disassembly of the Golgi complex, possibly through GBF1 interaction. This would result in depletion of MHC, trail receptors and IFN receptors at the host cell surface. Plays an essential role in viral RNA replication by recruiting ACBD3 and PI4KB at the viral replication sites, thereby allowing the formation of the rearranged membranous structures where viral replication takes place. Its function is as follows. Acts as a primer for viral RNA replication and remains covalently bound to viral genomic RNA. VPg is uridylylated prior to priming replication into VPg-pUpU. The oriI viral genomic sequence may act as a template for this. The VPg-pUpU is then used as primer on the genomic RNA poly(A) by the RNA-dependent RNA polymerase to replicate the viral genome. During genome replication, the VPg-RNA linkage is removed by the host TDP2, thereby accelerating replication. During the late stage of the replication cycle, host TDP2 is excluded from sites of viral RNA synthesis and encapsidation, allowing for the generation of progeny virions. Involved in the viral replication complex and viral polypeptide maturation. It exhibits protease activity with a specificity and catalytic efficiency that is different from protease 3C. Protein 3CD lacks polymerase activity. Protein 3CD binds to the 5'UTR of the viral genome. Functionally, replicates the viral genomic RNA on the surface of intracellular membranes. May form linear arrays of subunits that propagate along a strong head-to-tail interaction called interface-I. Covalently attaches UMP to a tyrosine of VPg, which is used to prime RNA synthesis. The positive stranded RNA genome is first replicated at virus induced membranous vesicles, creating a dsRNA genomic replication form. This dsRNA is then used as template to synthesize positive stranded RNA genomes. ss(+)RNA genomes are either translated, replicated or encapsidated. In terms of biological role, major viral protease that mediates proteolytic processing of the polyprotein. Cleaves host EIF5B, contributing to host translation shutoff. Also cleaves host PABPC1, contributing to host translation shutoff. Cleaves host NLRP1, triggers host N-glycine-mediated degradation of the autoinhibitory NLRP1 N-terminal fragment. This Echovirus 9 (strain Barty) protein is Genome polyprotein.